The sequence spans 166 residues: Deglycase TK1284 (166 aa).

One can recognise a PfpI endopeptidase domain in the interval 1 to 166; the sequence is MKVLILSADG…WMREFVKLLR (166 aa). His101 is a catalytic residue.

Belongs to the peptidase C56 family. In terms of assembly, homohexamer formed by a dimer of trimers that assemble into a hollow ring structure.

Its subcellular location is the cytoplasm. The enzyme catalyses N(omega)-(1-hydroxy-2-oxopropyl)-L-arginyl-[protein] + H2O = lactate + L-arginyl-[protein] + H(+). It catalyses the reaction N(6)-(1-hydroxy-2-oxopropyl)-L-lysyl-[protein] + H2O = lactate + L-lysyl-[protein] + H(+). It carries out the reaction S-(1-hydroxy-2-oxopropyl)-L-cysteinyl-[protein] + H2O = lactate + L-cysteinyl-[protein] + H(+). The catalysed reaction is N(omega)-(1-hydroxy-2-oxoethyl)-L-arginyl-[protein] + H2O = L-arginyl-[protein] + glycolate + H(+). The enzyme catalyses N(6)-(1-hydroxy-2-oxoethyl)-L-lysyl-[protein] + H2O = glycolate + L-lysyl-[protein] + H(+). It catalyses the reaction S-(1-hydroxy-2-oxoethyl)-L-cysteinyl-[protein] + H2O = glycolate + L-cysteinyl-[protein] + H(+). Functionally, deglycase that catalyzes the deglycation of the Maillard adducts formed between amino groups of proteins and reactive carbonyl groups of glyoxals. Thus, functions as a protein deglycase that repairs methylglyoxal- and glyoxal-glycated proteins, and releases repaired proteins and lactate or glycolate, respectively. Deglycates cysteine, arginine and lysine residues in proteins, and thus reactivates these proteins by reversing glycation by glyoxals. Acts on early glycation intermediates (hemithioacetals and aminocarbinols), preventing the formation of advanced glycation endproducts (AGE) that cause irreversible damage. Also displays proteolytic activity. The sequence is that of Deglycase TK1284 from Thermococcus kodakarensis (strain ATCC BAA-918 / JCM 12380 / KOD1) (Pyrococcus kodakaraensis (strain KOD1)).